A 152-amino-acid chain; its full sequence is MSSKLEQLQALLAPVIEALGYQCWGIEFLSQGRHSLLRVYIDKADGILIDDCEIVSRQLSGVLDVEDPISSEYTLEVSSPGMDRPLFTLEQFAAHVGEQVKIKLRSPFEGRRNFQGLLRGVEEQDVVVQVDDHEYLLPIDLIDKANIIPRFD.

The protein belongs to the RimP family.

It localises to the cytoplasm. Functionally, required for maturation of 30S ribosomal subunits. The protein is Ribosome maturation factor RimP of Ectopseudomonas mendocina (strain ymp) (Pseudomonas mendocina).